Here is a 252-residue protein sequence, read N- to C-terminus: Chitooligosaccharide deacetylase (252 aa).

Mg(2+) is bound by residues His61 and His125.

It belongs to the YdjC deacetylase family. ChbG subfamily. As to quaternary structure, homodimer. Requires Mg(2+) as cofactor.

It localises to the cytoplasm. It carries out the reaction N,N'-diacetylchitobiose + H2O = N-acetyl-beta-D-glucosaminyl-(1-&gt;4)-D-glucosamine + acetate. The catalysed reaction is diacetylchitobiose-6'-phosphate + H2O = N'-monoacetylchitobiose-6'-phosphate + acetate. Its pathway is glycan degradation; chitin degradation. In terms of biological role, involved in the degradation of chitin. ChbG is essential for growth on the acetylated chitooligosaccharides chitobiose and chitotriose but is dispensable for growth on cellobiose and chitosan dimer, the deacetylated form of chitobiose. Deacetylation of chitobiose-6-P and chitotriose-6-P is necessary for both the activation of the chb promoter by the regulatory protein ChbR and the hydrolysis of phosphorylated beta-glucosides by the phospho-beta-glucosidase ChbF. Catalyzes the removal of only one acetyl group from chitobiose-6-P to yield monoacetylchitobiose-6-P, the inducer of ChbR and the substrate of ChbF. This chain is Chitooligosaccharide deacetylase, found in Klebsiella pneumoniae subsp. pneumoniae (strain ATCC 700721 / MGH 78578).